The sequence spans 61 residues: Short neurotoxin 4 (61 aa).

Intrachain disulfides connect C3-C23, C17-C40, C42-C53, and C54-C59.

The protein belongs to the three-finger toxin family. Short-chain subfamily. Type I alpha-neurotoxin sub-subfamily. Expressed by the venom gland.

The protein resides in the secreted. Binds to muscle nicotinic acetylcholine receptor (nAChR) and inhibit acetylcholine from binding to the receptor, thereby impairing neuromuscular transmission. The chain is Short neurotoxin 4 from Naja annulifera (Banded Egyptian cobra).